The chain runs to 40 residues: Photosystem II reaction center protein J (40 aa).

A helical membrane pass occupies residues 8 to 28 (IPLWVVATIAGLGVITVVGIF).

The protein belongs to the PsbJ family. PSII is composed of 1 copy each of membrane proteins PsbA, PsbB, PsbC, PsbD, PsbE, PsbF, PsbH, PsbI, PsbJ, PsbK, PsbL, PsbM, PsbT, PsbX, PsbY, PsbZ, Psb30/Ycf12, peripheral proteins PsbO, CyanoQ (PsbQ), PsbU, PsbV and a large number of cofactors. It forms dimeric complexes.

The protein resides in the cellular thylakoid membrane. Its function is as follows. One of the components of the core complex of photosystem II (PSII). PSII is a light-driven water:plastoquinone oxidoreductase that uses light energy to abstract electrons from H(2)O, generating O(2) and a proton gradient subsequently used for ATP formation. It consists of a core antenna complex that captures photons, and an electron transfer chain that converts photonic excitation into a charge separation. In Nostoc sp. (strain PCC 7120 / SAG 25.82 / UTEX 2576), this protein is Photosystem II reaction center protein J.